A 276-amino-acid chain; its full sequence is Rhomboid protease GlpG (276 aa).

Helical transmembrane passes span 94 to 114 (GPVT…MQIL), 142 to 162 (ALMH…WYLG), 169 to 189 (LGSG…GYVQ), 192 to 212 (FSGP…GYVW), 229 to 249 (LIIF…GMSM), and 250 to 270 (ANGA…VDSL). Serine 201 acts as the Nucleophile in catalysis. Histidine 254 is an active-site residue.

This sequence belongs to the peptidase S54 family.

The protein localises to the cell inner membrane. It catalyses the reaction Cleaves type-1 transmembrane domains using a catalytic dyad composed of serine and histidine that are contributed by different transmembrane domains.. In terms of biological role, rhomboid-type serine protease that catalyzes intramembrane proteolysis. This chain is Rhomboid protease GlpG, found in Escherichia fergusonii (strain ATCC 35469 / DSM 13698 / CCUG 18766 / IAM 14443 / JCM 21226 / LMG 7866 / NBRC 102419 / NCTC 12128 / CDC 0568-73).